The primary structure comprises 132 residues: Small ribosomal subunit protein uS11 (132 aa).

The protein belongs to the universal ribosomal protein uS11 family. In terms of assembly, part of the 30S ribosomal subunit.

Located on the platform of the 30S subunit. This chain is Small ribosomal subunit protein uS11, found in Sulfurisphaera tokodaii (strain DSM 16993 / JCM 10545 / NBRC 100140 / 7) (Sulfolobus tokodaii).